The sequence spans 1278 residues: Alpha-glucan water dikinase 2 (1278 aa).

The first 23 residues, M1–G23, serve as a signal peptide directing secretion. H886 (tele-phosphohistidine intermediate) is an active-site residue.

The protein belongs to the PEP-utilizing enzyme family. In terms of assembly, homodimer. Mg(2+) serves as cofactor.

The enzyme catalyses [(1-&gt;4)-alpha-D-glucosyl](n) + n ATP + n H2O = [(1-&gt;4)-6-phospho-alpha-D-glucosyl](n) + n AMP + n phosphate + 2n H(+). Its function is as follows. Mediates the incorporation of phosphate into alpha-glucan, mostly at the C-6 position of glucose units. In Arabidopsis thaliana (Mouse-ear cress), this protein is Alpha-glucan water dikinase 2 (GWD2).